Here is a 168-residue protein sequence, read N- to C-terminus: uncharacterized protein (168 aa).

The next 2 membrane-spanning stretches (helical) occupy residues 27–47 and 147–167; these read NWLVILVFYFLAFGSIMRISG and IENGILLCQVLQALIIVQVMF.

It localises to the membrane. This is an uncharacterized protein from Saccharomyces cerevisiae (strain ATCC 204508 / S288c) (Baker's yeast).